Consider the following 317-residue polypeptide: tRNA-cytidine(32) 2-sulfurtransferase (317 aa).

Positions 63 to 68 match the PP-loop motif motif; sequence SGGKDS. 3 residues coordinate [4Fe-4S] cluster: cysteine 138, cysteine 141, and cysteine 229.

This sequence belongs to the TtcA family. In terms of assembly, homodimer. It depends on Mg(2+) as a cofactor. [4Fe-4S] cluster serves as cofactor.

Its subcellular location is the cytoplasm. It carries out the reaction cytidine(32) in tRNA + S-sulfanyl-L-cysteinyl-[cysteine desulfurase] + AH2 + ATP = 2-thiocytidine(32) in tRNA + L-cysteinyl-[cysteine desulfurase] + A + AMP + diphosphate + H(+). It participates in tRNA modification. In terms of biological role, catalyzes the ATP-dependent 2-thiolation of cytidine in position 32 of tRNA, to form 2-thiocytidine (s(2)C32). The sulfur atoms are provided by the cysteine/cysteine desulfurase (IscS) system. In Janthinobacterium sp. (strain Marseille) (Minibacterium massiliensis), this protein is tRNA-cytidine(32) 2-sulfurtransferase.